The sequence spans 22 residues: Major outer membrane protein (22 aa).

Belongs to the Gram-negative porin family. In terms of assembly, disulfide bond interactions within and between MOMP molecules and other components form high molecular-weight oligomers.

The protein resides in the cell outer membrane. Structural rigidity of the outer membrane of elementary bodies and porin forming, permitting diffusion of solutes through the intracellular reticulate body membrane. The sequence is that of Major outer membrane protein (ompH) from Avibacterium gallinarum (Pasteurella gallinarum).